The primary structure comprises 20 residues: Hemoglobinase-like protein 1 (20 aa).

Belongs to the peptidase C13 family.

It catalyses the reaction Hydrolysis of proteins and small molecule substrates at -Asn-|-Xaa- bonds.. The chain is Hemoglobinase-like protein 1 from Fasciola hepatica (Liver fluke).